The following is a 218-amino-acid chain: MSFLDSYRKKTLMPSTDEALPGRAQPIPTSATHFVNSRPLKEPWPEGYKQVLFGMGCFWGAERLFWQVPGVYVTAVGYAGGVTPNPTYEETCTGLTGHAEVVLVVYDPKVVSLDELLTLFWEEHDPTQGMRQGNDIGTTYRSVIYTFDKADRDVAEKSREAYSQALAGRGLGPITTEIEDAPELYYAEDYHQQYLAKNPNGYCGLRGTGVSCPIPLAQ.

Residue cysteine 57 is part of the active site.

The protein belongs to the MsrA Met sulfoxide reductase family.

The enzyme catalyses L-methionyl-[protein] + [thioredoxin]-disulfide + H2O = L-methionyl-(S)-S-oxide-[protein] + [thioredoxin]-dithiol. It catalyses the reaction [thioredoxin]-disulfide + L-methionine + H2O = L-methionine (S)-S-oxide + [thioredoxin]-dithiol. Its function is as follows. Has an important function as a repair enzyme for proteins that have been inactivated by oxidation. Catalyzes the reversible oxidation-reduction of methionine sulfoxide in proteins to methionine. The polypeptide is Peptide methionine sulfoxide reductase MsrA (Brucella anthropi (Ochrobactrum anthropi)).